The chain runs to 445 residues: Rab GDP dissociation inhibitor beta (445 aa).

The residue at position 1 (Met1) is an N-acetylmethionine. N6-succinyllysine is present on Lys57. Lys112 bears the N6-acetyllysine mark. Residue Ser130 is modified to Phosphoserine. Lys269 bears the N6-acetyllysine mark. Ser382 is subject to Phosphoserine.

It belongs to the Rab GDI family. As to quaternary structure, interacts with RHOH. Interacts with the GDP-bound inactive forms of RAB3A, RAB3B, RAB3C, RAB5A, RAB5B, RAB5C, RAB8A, RAB8B, RAB10, RAB12, RAB35, and RAB43; binds RAB3D to a lesser extent. Interacts with DZIP1; this interaction negatively regulates the interaction of GDI2 with GDP-bound RAB8A. In terms of tissue distribution, ubiquitously expressed.

Its subcellular location is the cytoplasm. The protein localises to the membrane. The protein resides in the golgi apparatus. It is found in the trans-Golgi network. In terms of biological role, GDP-dissociation inhibitor preventing the GDP to GTP exchange of most Rab proteins. By keeping these small GTPases in their inactive GDP-bound form regulates intracellular membrane trafficking. Negatively regulates protein transport to the cilium and ciliogenesis through the inhibition of RAB8A. This chain is Rab GDP dissociation inhibitor beta (Gdi2), found in Rattus norvegicus (Rat).